Here is a 331-residue protein sequence, read N- to C-terminus: MFSILYNLLEILVVLVPILLSVAFMTVIERKVMGSMQRRIGPNVVGYYALLQPFADALKLVIKEQVIPSQATKSLFFLAPMVTLIFSLLGWGVIPLGPGLALSDFSLGILYSLALSSIGVYGILFAGWSANSKYAFLGSLRSTAQMISYELIYSAAVLAVILLCGTFNITEIIESQQSVWYIMPLLPIFILFFVSALAETNRTPFDLPEAESELVAGFMTEHSGMIFVFFFLAEYGSIVLMSTFTAILFLGGYNMSPQVLFAEDSFINLQSIALAVKAVLIMFLFVWIRATLPRMRYDSLMTFCWTGMLPVAIALLILVPSLLIAFDISPY.

The next 8 helical transmembrane spans lie at 8-28 (LLEI…MTVI), 75-95 (LFFL…GVIP), 107-127 (LGIL…LFAG), 147-167 (ISYE…CGTF), 178-198 (SVWY…SALA), 224-244 (GMIF…MSTF), 266-286 (FINL…FLFV), and 308-328 (MLPV…AFDI).

Belongs to the complex I subunit 1 family.

It is found in the mitochondrion inner membrane. The catalysed reaction is a ubiquinone + NADH + 5 H(+)(in) = a ubiquinol + NAD(+) + 4 H(+)(out). Functionally, core subunit of the mitochondrial membrane respiratory chain NADH dehydrogenase (Complex I) that is believed to belong to the minimal assembly required for catalysis. Complex I functions in the transfer of electrons from NADH to the respiratory chain. The immediate electron acceptor for the enzyme is believed to be ubiquinone. The protein is NADH-ubiquinone oxidoreductase chain 1 (ND1) of Mycosarcoma maydis (Corn smut fungus).